A 110-amino-acid polypeptide reads, in one-letter code: Large ribosomal subunit protein uL22 (110 aa).

This sequence belongs to the universal ribosomal protein uL22 family. Part of the 50S ribosomal subunit.

This protein binds specifically to 23S rRNA; its binding is stimulated by other ribosomal proteins, e.g. L4, L17, and L20. It is important during the early stages of 50S assembly. It makes multiple contacts with different domains of the 23S rRNA in the assembled 50S subunit and ribosome. Its function is as follows. The globular domain of the protein is located near the polypeptide exit tunnel on the outside of the subunit, while an extended beta-hairpin is found that lines the wall of the exit tunnel in the center of the 70S ribosome. This is Large ribosomal subunit protein uL22 from Hydrogenovibrio crunogenus (strain DSM 25203 / XCL-2) (Thiomicrospira crunogena).